The sequence spans 98 residues: Integration host factor subunit beta (98 aa).

Belongs to the bacterial histone-like protein family. Heterodimer of an alpha and a beta chain.

This protein is one of the two subunits of integration host factor, a specific DNA-binding protein that functions in genetic recombination as well as in transcriptional and translational control. The chain is Integration host factor subunit beta from Pseudomonas putida (strain W619).